The primary structure comprises 282 residues: Elongation factor Ts (282 aa).

Residues 80-83 (TDFV) are involved in Mg(2+) ion dislocation from EF-Tu.

Belongs to the EF-Ts family.

It localises to the cytoplasm. Functionally, associates with the EF-Tu.GDP complex and induces the exchange of GDP to GTP. It remains bound to the aminoacyl-tRNA.EF-Tu.GTP complex up to the GTP hydrolysis stage on the ribosome. This Chlamydia trachomatis serovar L2b (strain UCH-1/proctitis) protein is Elongation factor Ts.